The sequence spans 285 residues: Transcription factor JAMYB (285 aa).

2 consecutive HTH myb-type domains span residues 26–78 and 79–133; these read SAEL…LNYL and RPDV…QKHA. DNA-binding regions (H-T-H motif) lie at residues 54–78 and 106–129; these read WNAL…LNYL and WSKI…RTRV.

It localises to the nucleus. Its function is as follows. Probable transcription factor that may be involved in the jasmonate-dependent defense responses to the rice blast fungus Magnaporthe oryzae. Does not seem to function in the salicylic acid-dependent signaling pathway. The sequence is that of Transcription factor JAMYB from Oryza sativa subsp. japonica (Rice).